A 130-amino-acid chain; its full sequence is Small ribosomal subunit protein uS8 (130 aa).

Belongs to the universal ribosomal protein uS8 family. As to quaternary structure, part of the 30S ribosomal subunit. Contacts proteins S5 and S12.

One of the primary rRNA binding proteins, it binds directly to 16S rRNA central domain where it helps coordinate assembly of the platform of the 30S subunit. This Nitrosococcus oceani (strain ATCC 19707 / BCRC 17464 / JCM 30415 / NCIMB 11848 / C-107) protein is Small ribosomal subunit protein uS8.